The sequence spans 153 residues: Small ribosomal subunit protein bS16 (153 aa).

The tract at residues 114 to 153 (ENEPVGEAITPKKKKAKAEDAEAAADAPAEAAAESEAADK) is disordered. A compositionally biased stretch (low complexity) spans 137–153 (AADAPAEAAAESEAADK).

Belongs to the bacterial ribosomal protein bS16 family.

This Rhodococcus opacus (strain B4) protein is Small ribosomal subunit protein bS16.